The chain runs to 122 residues: Large ribosomal subunit protein uL14c (122 aa).

Belongs to the universal ribosomal protein uL14 family. Part of the 50S ribosomal subunit.

The protein resides in the plastid. Its subcellular location is the chloroplast. In terms of biological role, binds to 23S rRNA. The protein is Large ribosomal subunit protein uL14c of Nicotiana sylvestris (Wood tobacco).